A 653-amino-acid polypeptide reads, in one-letter code: MKVSQILPLAGAISVASGFWIPDFSNKQNSNSYPGQYKGKGGYQDDCGDDYKKGYKSKTYSKVKPITSTDCTTPIQPTGTTTGYTKDVVESTSYTTDTAYTTTVITVTKCDGGSCSHTAVTTGVTIITVTTNDVITEYTTYCPLTSTPATESTPATESTPATESTPATESTPATESTPATESTPCTTSTETTPATESTPATESTPATESTPATESTPATESTPATESTPATESTPATESTPCTTSTETTPATESTASTETASSTPVESTVIVPSTTVITVSSCYEDKCSVSSVTTGVVTISSEETIYTTYCPITSSITIPVPNTSTPAAPGTPVESQPVIPGTETTPAAPGTPVESQPVIPGTETTPAAPGTPVESQPATTPVAPGTETTPAAPGTPVESQPATTPVAPGTETTPAAPGTPVESQPVIPGTETTPAAPGTPVESQPATTPVAPGTETTPAAPGTPVESQPVIPGTETTPAAPGTPVESQPATTPVAPGTETTPAAPGTPVESQPVIPGTETTPAAPGTPGTEATPVTTQPVSVLSTSQVVTASGEFSTVTAHSTSIVASCPEGGCVPEGQQTETSPSVPTNGPEVEASSSVLSIPVSSVTTSTIASSSETSVPPAQVSTFEGSGSALKKPYYGLAVAALVYFM.

The signal sequence occupies residues 1–18 (MKVSQILPLAGAISVASG). Residues 19–146 (FWIPDFSNKQ…EYTTYCPLTS (128 aa)) form an N-terminal cell-cell adhesion domain region. The interval 144-267 (LTSTPATEST…TETASSTPVE (124 aa)) is disordered. A compositionally biased stretch (low complexity) spans 145–267 (TSTPATESTP…TETASSTPVE (123 aa)). Repeat copies occupy residues 147 to 152 (TPATES), 153 to 158 (TPATES), 159 to 164 (TPATES), 165 to 170 (TPATES), 171 to 176 (TPATES), 177 to 182 (TPATES), 192 to 197 (TPATES), 198 to 203 (TPATES), 204 to 209 (TPATES), 210 to 215 (TPATES), 216 to 221 (TPATES), 222 to 227 (TPATES), 228 to 233 (TPATES), 234 to 248 (TPATESTPCTTSTET), and 249 to 254 (TPATES). The segment at 147–254 (TPATESTPAT…STETTPATES (108 aa)) is 15 X 6 AA tandem repeats, Ser/Thr-rich. N323 is a glycosylation site (N-linked (GlcNAc...) asparagine). Disordered stretches follow at residues 324–540 (TSTP…TTQP) and 572–595 (EGGCVPEGQQTETSPSVPTNGPEV). Repeat copies occupy residues 326-345 (TPAAPGTPVESQPVIPGTET), 346-365 (TPAAPGTPVESQPVIPGTET), 366-389 (TPAAPGTPVESQPATTPVAPGTET), 390-413 (TPAAPGTPVESQPATTPVAPGTET), 414-433 (TPAAPGTPVESQPVIPGTET), 434-457 (TPAAPGTPVESQPATTPVAPGTET), 458-477 (TPAAPGTPVESQPVIPGTET), 478-501 (TPAAPGTPVESQPATTPVAPGTET), 502-521 (TPAAPGTPVESQPVIPGTET), and 522-541 (TPAAPGTPGTEATPVTTQPV). A 10 X 20 AA approximate tandem repeats region spans residues 326 to 541 (TPAAPGTPVE…EATPVTTQPV (216 aa)). Composition is skewed to low complexity over residues 341-353 (PGTETTPAAPGTP) and 361-538 (PGTE…PVTT). Over residues 579 to 590 (GQQTETSPSVPT) the composition is skewed to polar residues. G632 carries GPI-anchor amidated glycine lipidation. Residues 633-653 (SGSALKKPYYGLAVAALVYFM) constitute a propeptide, removed in mature form.

Belongs to the PGA18 family. Post-translationally, the GPI-anchor is attached to the protein in the endoplasmic reticulum and serves to target the protein to the cell surface. There, the glucosamine-inositol phospholipid moiety is cleaved off and the GPI-modified mannoprotein is covalently attached via its lipidless GPI glycan remnant to the 1,6-beta-glucan of the outer cell wall layer.

The protein resides in the secreted. Its subcellular location is the cell wall. It localises to the membrane. Functionally, cell wall protein which mediates cell-cell and cell-substrate adhesion. Required for biofilm formation and plays a role in virulence. The sequence is that of Cell wall adhesin EAP1 (EAP1) from Candida albicans (strain SC5314 / ATCC MYA-2876) (Yeast).